The sequence spans 1012 residues: Structural polyprotein (1012 aa).

Asp30 is a binding site for a divalent metal cation. The Peptidase S50 domain maps to 513-755 (ADKGYEVVAN…AGRQYHLAMA (243 aa)). The active-site Nucleophile is Ser652. Residue Lys692 is part of the active site. A disordered region spans residues 969 to 1012 (AMEMKHRNPRRALPKPKPKPNAPTQRPPGRLGRWIRTVSDEDLE). Positions 975-986 (RNPRRALPKPKP) are enriched in basic residues. An interaction with VP1 protein region spans residues 1003-1012 (IRTVSDEDLE).

Homotrimer. A central divalent metal stabilizes the VP2 trimer. Interacts with host ITGA4/ITGB1. In terms of assembly, homodimer. Interacts (via C-terminus) with VP1 in the cytoplasm. Interacts with VP2. In terms of processing, specific enzymatic cleavages yield mature proteins. The capsid assembly seems to be regulated by polyprotein processing. The protease VP4 cleaves itself off the polyprotein, thus releasing pre-VP2 and VP3 within the infected cell. During capsid assembly, the C-terminus of pre-VP2 is further processed by VP4, giving rise to VP2, the external capsid protein and three small peptides that all stay closely associated with the capsid.

It localises to the virion. It is found in the host cytoplasm. Capsid protein VP2 self assembles to form an icosahedral capsid with a T=13 symmetry, about 70 nm in diameter, and consisting of 260 VP2 trimers. The capsid encapsulates the genomic dsRNA. VP2 is also involved in attachment and entry into the host cell by interacting with host ITGA4/ITGB1. Functionally, the precursor of VP2 plays an important role in capsid assembly. First, pre-VP2 and VP2 oligomers assemble to form a procapsid. Then, the pre-VP2 intermediates may be processed into VP2 proteins by proteolytic cleavage mediated by VP4 to obtain the mature virion. The final capsid is composed of pentamers and hexamers but VP2 has a natural tendency to assemble into all-pentameric structures. Therefore pre-VP2 may be required to allow formation of the hexameric structures. Its function is as follows. Protease VP4 is a serine protease that cleaves the polyprotein into its final products. Pre-VP2 is first partially cleaved, and may be completely processed by VP4 upon capsid maturation. In terms of biological role, capsid protein VP3 plays a key role in virion assembly by providing a scaffold for the capsid made of VP2. May self-assemble to form a T=4-like icosahedral inner-capsid composed of at least 180 trimers. Plays a role in genomic RNA packaging by recruiting VP1 into the capsid and interacting with the dsRNA genome segments to form a ribonucleoprotein complex. Additionally, the interaction of the VP3 C-terminal tail with VP1 removes the inherent structural blockade of the polymerase active site. Thus, VP3 can also function as a transcriptional activator. Structural peptide 1 is a small peptide derived from pre-VP2 C-terminus. It destabilizes and perforates cell membranes, suggesting a role during entry. Functionally, structural peptide 2 is a small peptide derived from pre-VP2 C-terminus. It is not essential for the virus viability, but viral growth is affected when missing. Its function is as follows. Structural peptide 3 is a small peptide derived from pre-VP2 C-terminus. It is not essential for the virus viability, but viral growth is affected when missing. In terms of biological role, structural peptide 4 is a small peptide derived from pVP2 C-terminus. It is essential for the virus viability. This Gallus gallus (Chicken) protein is Structural polyprotein.